A 257-amino-acid chain; its full sequence is Inositol diphosphatase DSP2 (257 aa).

Residues 66–251 (NFSMVDNGIF…VSGLKHTPMS (186 aa)) enclose the Tyrosine-protein phosphatase domain. 1D-myo-inositol hexakisphosphate is bound by residues Ile-168 and Lys-172. Cys-192 functions as the Phosphocysteine intermediate in the catalytic mechanism.

The protein belongs to the protein-tyrosine phosphatase family. Atypical dual-specificity phosphatase Siw14-like subfamily. In terms of tissue distribution, expressed in roots, leaves, stems, flowers and siliques.

The enzyme catalyses 5-diphospho-1D-myo-inositol 1,2,3,4,6-pentakisphosphate + H2O = 1D-myo-inositol hexakisphosphate + phosphate + H(+). It carries out the reaction 1,5-bis(diphospho)-1D-myo-inositol 2,3,4,6-tetrakisphosphate + H2O = 1-diphospho-1D-myo-inositol 2,3,4,5,6-pentakisphosphate + phosphate + 2 H(+). The catalysed reaction is 3,5-bis(diphospho)-1D-myo-inositol 1,2,4,6-tetrakisphosphate + H2O = 3-diphospho-1D-myo-inositol 1,2,4,5,6-pentakisphosphate + phosphate + 2 H(+). It catalyses the reaction 6-diphospho-1D-myo-inositol pentakisphosphate + H2O = 1D-myo-inositol hexakisphosphate + phosphate + H(+). Its function is as follows. Cleaves the beta-phosphate at the 5-position of soluble inositol pyrophosphates. Has highest activity on 5-diphosphoinositol 1,2,3,4,6-pentakisphosphate (5-InsP(7)), 1,5-bis-diphosphoinositol 2,3,4,6-tetrakisphosphate (1,5-InsP(8)) and 3,5-InsP(8). Possesses phosphotyrosine phosphatase activity in vitro. Dephosphorylates the phosphoinositides PI(3,5)P2. Hydrolyzes para-nitrophenyl phosphate and O-methylfluorescein phosphate in vitro. The chain is Inositol diphosphatase DSP2 from Arabidopsis thaliana (Mouse-ear cress).